The primary structure comprises 476 residues: Cytochrome P450 6B5 (476 aa).

Cysteine 443 contacts heme.

It belongs to the cytochrome P450 family. Heme is required as a cofactor.

Its subcellular location is the endoplasmic reticulum membrane. It is found in the microsome membrane. The enzyme catalyses an organic molecule + reduced [NADPH--hemoprotein reductase] + O2 = an alcohol + oxidized [NADPH--hemoprotein reductase] + H2O + H(+). Functionally, enables the insect to feed on furanocoumarin-producing plants and evolved as an adaptation for detoxification of xanthotoxin and other furanocoumarins. The sequence is that of Cytochrome P450 6B5 (CYP6B5) from Papilio glaucus (Eastern tiger swallowtail butterfly).